A 706-amino-acid polypeptide reads, in one-letter code: Fatty acid oxidation complex subunit alpha (706 aa).

The tract at residues 1–188 (MEKTFNLTRR…KMGLVNDVVP (188 aa)) is enoyl-CoA hydratase. Residues 308–706 (RKVKKAVILG…TMAQENAHFF (399 aa)) form a 3-hydroxyacyl-CoA dehydrogenase region.

This sequence in the N-terminal section; belongs to the enoyl-CoA hydratase/isomerase family. The protein in the central section; belongs to the 3-hydroxyacyl-CoA dehydrogenase family. Heterotetramer of two alpha chains (FadJ) and two beta chains (FadI).

The protein localises to the cytoplasm. It catalyses the reaction a (3S)-3-hydroxyacyl-CoA = a (2E)-enoyl-CoA + H2O. The enzyme catalyses a 4-saturated-(3S)-3-hydroxyacyl-CoA = a (3E)-enoyl-CoA + H2O. The catalysed reaction is a (3S)-3-hydroxyacyl-CoA + NAD(+) = a 3-oxoacyl-CoA + NADH + H(+). It carries out the reaction (3S)-3-hydroxybutanoyl-CoA = (3R)-3-hydroxybutanoyl-CoA. It participates in lipid metabolism; fatty acid beta-oxidation. In terms of biological role, catalyzes the formation of a hydroxyacyl-CoA by addition of water on enoyl-CoA. Also exhibits 3-hydroxyacyl-CoA epimerase and 3-hydroxyacyl-CoA dehydrogenase activities. This is Fatty acid oxidation complex subunit alpha from Shewanella baltica (strain OS185).